Here is a 320-residue protein sequence, read N- to C-terminus: Aminoacyl tRNA synthase complex-interacting multifunctional protein 2 (320 aa).

Position 36 is a phosphoserine (S36). The tract at residues T82 to P162 is interaction with PRKN. The segment at P162–H225 is interaction with TP53. One can recognise a GST C-terminal domain in the interval L220–Q317.

Part of the multisynthetase complex (MSC), a multisubunit complex that groups tRNA ligases for Arg (RARS1), Asp (DARS1), Gln (QARS1), Ile (IARS1), Leu (LARS1), Lys (KARS1), Met (MARS1) the bifunctional ligase for Glu and Pro (EPRS1) and the auxiliary subunits AIMP1/p43, AIMP2/p38 and EEF1E1/p18. Interacts (via N-terminus) with KARS1. Interacts with EPRS1. Forms a linear complex that contains MARS1, EEF1E1, EPRS1 and AIMP2 that is at the core of the multisubunit complex. Binds FUBP1 (via C-terminus). Interacts in both its unphosphorylated and phosphorylated forms with p53/TP53 (via N-terminus) in the nucleus following UV irradiation. Interacts (via N-terminus) with PRKN/parkin (via first RING-type domain). Interacts with TARS3. Phosphorylated on serine residues in response to UV irradiation. Post-translationally, ubiquitinated by PRKN, leading to its degradation by the proteasome.

It is found in the cytoplasm. It localises to the cytosol. Its subcellular location is the nucleus. Functionally, required for assembly and stability of the aminoacyl-tRNA synthase complex. Mediates ubiquitination and degradation of FUBP1, a transcriptional activator of MYC, leading to MYC down-regulation which is required for aveolar type II cell differentiation. Blocks MDM2-mediated ubiquitination and degradation of p53/TP53. Functions as a proapoptotic factor. The protein is Aminoacyl tRNA synthase complex-interacting multifunctional protein 2 (Aimp2) of Mus musculus (Mouse).